A 135-amino-acid polypeptide reads, in one-letter code: Large-conductance mechanosensitive channel (135 aa).

The next 2 helical transmembrane spans lie at 10–30 and 76–96; these read FAMKGNVVDMAVGVIIGAAFG and GAFIQTVFDFAIVAFAIFCAI.

Belongs to the MscL family. In terms of assembly, homopentamer.

It is found in the cell inner membrane. Its function is as follows. Channel that opens in response to stretch forces in the membrane lipid bilayer. May participate in the regulation of osmotic pressure changes within the cell. This chain is Large-conductance mechanosensitive channel, found in Proteus mirabilis (strain HI4320).